We begin with the raw amino-acid sequence, 85 residues long: Putative RING finger protein 095L (85 aa).

An RING-type; degenerate zinc finger spans residues 39-73 (CPIWYNYQVNTVFLPCAHVACYLCSKIIKNCHLCR).

The protein is Putative RING finger protein 095L of Invertebrate iridescent virus 6 (IIV-6).